Here is a 162-residue protein sequence, read N- to C-terminus: Shikimate kinase (162 aa).

G10–T15 provides a ligand contact to ATP. Position 14 (S14) interacts with Mg(2+). The substrate site is built by D28, R52, and G73. Residue R113 participates in ATP binding. R129 provides a ligand contact to substrate.

The protein belongs to the shikimate kinase family. As to quaternary structure, monomer. Mg(2+) is required as a cofactor.

The protein localises to the cytoplasm. The enzyme catalyses shikimate + ATP = 3-phosphoshikimate + ADP + H(+). Its pathway is metabolic intermediate biosynthesis; chorismate biosynthesis; chorismate from D-erythrose 4-phosphate and phosphoenolpyruvate: step 5/7. Its function is as follows. Catalyzes the specific phosphorylation of the 3-hydroxyl group of shikimic acid using ATP as a cosubstrate. In Lactococcus lactis subsp. cremoris (strain SK11), this protein is Shikimate kinase.